Reading from the N-terminus, the 99-residue chain is Phosphoribosyl-ATP pyrophosphatase (99 aa).

This sequence belongs to the PRA-PH family.

Its subcellular location is the cytoplasm. The enzyme catalyses 1-(5-phospho-beta-D-ribosyl)-ATP + H2O = 1-(5-phospho-beta-D-ribosyl)-5'-AMP + diphosphate + H(+). It functions in the pathway amino-acid biosynthesis; L-histidine biosynthesis; L-histidine from 5-phospho-alpha-D-ribose 1-diphosphate: step 2/9. The protein is Phosphoribosyl-ATP pyrophosphatase of Methanosphaerula palustris (strain ATCC BAA-1556 / DSM 19958 / E1-9c).